The following is a 76-amino-acid chain: Zinc finger protein 706 (76 aa).

A compositionally biased stretch (low complexity) spans 1-13; that stretch reads MARGQQKIQSQQK. Disordered regions lie at residues 1–32 and 53–76; these read MARG…QKAA and TFKQ…DVQA. Basic residues predominate over residues 14–25; sequence NAKKQAGQKKKQ. The segment at 39–62 adopts a C2H2-type zinc-finger fold; it reads YTCTVCRTQMPDPKTFKQHFESKH. Residues 53-62 are compositionally biased toward basic and acidic residues; it reads TFKQHFESKH.

The protein localises to the cytoplasm. It localises to the nucleus. Functionally, transcription repressor involved in the exit of embryonic stem cells (ESCs) from self-renewal. Acts by repressing expression of KLF4. The sequence is that of Zinc finger protein 706 from Homo sapiens (Human).